The primary structure comprises 249 residues: MSGHSKWATIKRKKDAIDSKRGAIFTRVGKEITVAAKMGGGDPEGNPRLRLAILKAKSVNMPKDNIERAIKKGTGELEGVVYEECLYECFGPAGIAIMVSAVTDKKSRTTPEIKSILTKLGGSLATSGSVSRLFEKKGVIVLESSQIGEDKLVDLAVGEGAEDVINEGEVYRVITTPDDYESVLHALNEKGLKSEESEIRYIALISSEIADKEVAKKVMKLIEQLDGHDDVTSVTSNFELAASLEKEFE.

Belongs to the TACO1 family.

The protein resides in the cytoplasm. The polypeptide is Probable transcriptional regulatory protein LBL_2537 (Leptospira borgpetersenii serovar Hardjo-bovis (strain L550)).